Reading from the N-terminus, the 433-residue chain is Tyrosine--tRNA ligase (433 aa).

Y34 contributes to the L-tyrosine binding site. A 'HIGH' region motif is present at residues 39 to 48; the sequence is PTASSLHVGS. L-tyrosine-binding residues include Y169 and Q173. The 'KMSKS' region motif lies at 229–233; it reads KMGKT. K232 provides a ligand contact to ATP. The S4 RNA-binding domain maps to 364–432; it reads IPAFVLFHTV…RYHTIVVRKG (69 aa).

It belongs to the class-I aminoacyl-tRNA synthetase family. TyrS type 1 subfamily. As to quaternary structure, homodimer.

Its subcellular location is the cytoplasm. The enzyme catalyses tRNA(Tyr) + L-tyrosine + ATP = L-tyrosyl-tRNA(Tyr) + AMP + diphosphate + H(+). Its function is as follows. Catalyzes the attachment of tyrosine to tRNA(Tyr) in a two-step reaction: tyrosine is first activated by ATP to form Tyr-AMP and then transferred to the acceptor end of tRNA(Tyr). The sequence is that of Tyrosine--tRNA ligase from Desulfosudis oleivorans (strain DSM 6200 / JCM 39069 / Hxd3) (Desulfococcus oleovorans).